The sequence spans 1943 residues: Sickle tail protein homolog (1943 aa).

Disordered stretches follow at residues 1-79 and 112-177; these read MEEN…KEIL and QERL…RSTN. Residues 38–47 show a composition bias toward basic and acidic residues; that stretch reads AECRRTKERL. Positions 48-62 are enriched in polar residues; it reads SNGNSRGSVSKSSRN. Serine 169 is modified (phosphoserine). Tyrosine 244 is subject to Phosphotyrosine. Positions 290 to 331 are disordered; the sequence is ARGDGPGAPRPGSTAHPPHAIPNSPPSTPVPHSMPPSPSRIP. A compositionally biased stretch (pro residues) spans 308 to 328; the sequence is HAIPNSPPSTPVPHSMPPSPS. Residue serine 357 is glycosylated (O-linked (GlcNAc) serine). 2 positions are modified to phosphoserine: serine 361 and serine 365. At tyrosine 393 the chain carries Phosphotyrosine. Residues 456 to 476 are disordered; that stretch reads RKYPDSHLPTLGSKTPPASPH. Threonine 470 carries the post-translational modification Phosphothreonine. A phosphoserine mark is found at serine 474 and serine 526. Coiled coils occupy residues 557-581 and 644-685; these read RETR…QSAL and MSLL…ELEI. Position 809 is a phosphoserine (serine 809). The tract at residues 848–874 is disordered; it reads VLKSQEEAAHTSGQPFHSTGAPGDAKS. Residues 957-985 adopt a coiled-coil conformation; it reads SAKNRAVSIEKAEKKWEEKRQNLDHYNGK. Disordered regions lie at residues 1003-1230, 1305-1329, and 1352-1377; these read PNLE…SDAS, KTKE…TESS, and PKEA…TEEN. A phosphoserine mark is found at serine 1027, serine 1030, serine 1033, and serine 1044. The segment covering 1044-1053 has biased composition (pro residues); the sequence is SPPPPPPPPR. Composition is skewed to basic and acidic residues over residues 1155–1167, 1174–1192, and 1305–1318; these read EPSR…KDTR, PKEK…KSDV, and KTKE…DKCH. Positions 1368-1377 are enriched in polar residues; it reads SSSSSPTEEN. Serine 1461 carries the phosphoserine modification. Residues 1464 to 1490 adopt a coiled-coil conformation; that stretch reads FEECDEELERMMMEEKIEEEEEEENGD. Disordered stretches follow at residues 1481-1572, 1606-1660, and 1677-1943; these read EEEE…PKKK, EEEE…EIRK, and ENTI…KETS. 2 stretches are compositionally biased toward polar residues: residues 1491 to 1501 and 1512 to 1533; these read SVVQNNNTSQM and RTGQ…TRNP. Basic and acidic residues-rich tracts occupy residues 1539–1548 and 1612–1625; these read NRTELNKFSH and GTLK…RFEI. Residues 1643 to 1653 are compositionally biased toward polar residues; it reads QPSIESTSPIS. The stretch at 1656-1686 forms a coiled coil; that stretch reads DEIRKNTYRTLDSLEQTIKQLENTISEMSPK. Composition is skewed to polar residues over residues 1691–1706 and 1731–1747; these read TSCS…SSHI and IPSA…QTSR. Serine 1739 carries the phosphoserine modification. Basic and acidic residues predominate over residues 1763-1775; sequence KPGKQSKLQDPRQ. The span at 1806–1825 shows a compositional bias: low complexity; that stretch reads SPSSGKSSSLPSSSGDSSNL. Composition is skewed to polar residues over residues 1834-1843 and 1853-1869; these read SIASNPLSPQ and LIPS…SLTH. At serine 1841 the chain carries Phosphoserine. Positions 1892–1905 are enriched in low complexity; the sequence is SFSSSPPSPASSVS. Phosphoserine is present on residues serine 1896, serine 1899, and serine 1902. Residues 1906–1943 are compositionally biased toward polar residues; that stretch reads LNQGAKGTRTIHTPSLTSYKAQNGSSSKATPSTAKETS.

In terms of assembly, interacts with CPNE4 (via VWFA domain).

It is found in the cytoplasm. The protein resides in the cytoskeleton. The protein localises to the microtubule organizing center. It localises to the centrosome. Functionally, required for normal development of intervertebral disks. This chain is Sickle tail protein homolog (KIAA1217), found in Homo sapiens (Human).